We begin with the raw amino-acid sequence, 133 residues long: Small ribosomal subunit protein uS8 (133 aa).

The protein belongs to the universal ribosomal protein uS8 family. Part of the 30S ribosomal subunit. Contacts proteins S5 and S12.

One of the primary rRNA binding proteins, it binds directly to 16S rRNA central domain where it helps coordinate assembly of the platform of the 30S subunit. This Trichormus variabilis (strain ATCC 29413 / PCC 7937) (Anabaena variabilis) protein is Small ribosomal subunit protein uS8.